A 452-amino-acid chain; its full sequence is UDP-N-acetylmuramoylalanine--D-glutamate ligase (452 aa).

Residue 119 to 125 (GSNGKTT) coordinates ATP.

The protein belongs to the MurCDEF family.

Its subcellular location is the cytoplasm. It carries out the reaction UDP-N-acetyl-alpha-D-muramoyl-L-alanine + D-glutamate + ATP = UDP-N-acetyl-alpha-D-muramoyl-L-alanyl-D-glutamate + ADP + phosphate + H(+). The protein operates within cell wall biogenesis; peptidoglycan biosynthesis. In terms of biological role, cell wall formation. Catalyzes the addition of glutamate to the nucleotide precursor UDP-N-acetylmuramoyl-L-alanine (UMA). The chain is UDP-N-acetylmuramoylalanine--D-glutamate ligase from Streptococcus pyogenes serotype M12 (strain MGAS9429).